A 109-amino-acid chain; its full sequence is Phosphoribosyl-AMP cyclohydrolase (109 aa).

A Mg(2+)-binding site is contributed by Asp-80. Residue Cys-81 participates in Zn(2+) binding. Positions 82 and 84 each coordinate Mg(2+). Zn(2+)-binding residues include Cys-97 and Cys-104.

Belongs to the PRA-CH family. In terms of assembly, homodimer. Mg(2+) serves as cofactor. Zn(2+) is required as a cofactor.

It localises to the cytoplasm. It catalyses the reaction 1-(5-phospho-beta-D-ribosyl)-5'-AMP + H2O = 1-(5-phospho-beta-D-ribosyl)-5-[(5-phospho-beta-D-ribosylamino)methylideneamino]imidazole-4-carboxamide. Its pathway is amino-acid biosynthesis; L-histidine biosynthesis; L-histidine from 5-phospho-alpha-D-ribose 1-diphosphate: step 3/9. Its function is as follows. Catalyzes the hydrolysis of the adenine ring of phosphoribosyl-AMP. The polypeptide is Phosphoribosyl-AMP cyclohydrolase (Clostridium beijerinckii (strain ATCC 51743 / NCIMB 8052) (Clostridium acetobutylicum)).